Here is a 468-residue protein sequence, read N- to C-terminus: Chromosomal replication initiator protein DnaA (468 aa).

Residues 1–84 (MSSSLWLQCM…RFEVGSRPVA (84 aa)) form a domain I, interacts with DnaA modulators region. Residues 81-113 (RPVAAPKPAPTRTPADVAAESSAPAQLQARKPV) form a disordered region. The interval 84 to 131 (AAPKPAPTRTPADVAAESSAPAQLQARKPVHKTWDDDAQAIADINHRS) is domain II. Residues 132-348 (NVNPKHKFNN…GALNRVIANA (217 aa)) are domain III, AAA+ region. ATP is bound by residues Gly176, Gly178, Lys179, and Thr180. Residues 349 to 468 (NFTGRPITID…YSNLIRTLSS (120 aa)) are domain IV, binds dsDNA.

Belongs to the DnaA family. As to quaternary structure, oligomerizes as a right-handed, spiral filament on DNA at oriC.

Its subcellular location is the cytoplasm. Functionally, plays an essential role in the initiation and regulation of chromosomal replication. ATP-DnaA binds to the origin of replication (oriC) to initiate formation of the DNA replication initiation complex once per cell cycle. Binds the DnaA box (a 9 base pair repeat at the origin) and separates the double-stranded (ds)DNA. Forms a right-handed helical filament on oriC DNA; dsDNA binds to the exterior of the filament while single-stranded (ss)DNA is stabiized in the filament's interior. The ATP-DnaA-oriC complex binds and stabilizes one strand of the AT-rich DNA unwinding element (DUE), permitting loading of DNA polymerase. After initiation quickly degrades to an ADP-DnaA complex that is not apt for DNA replication. Binds acidic phospholipids. The polypeptide is Chromosomal replication initiator protein DnaA (Vibrio vulnificus (strain CMCP6)).